The primary structure comprises 62 residues: Large ribosomal subunit protein bL28 (62 aa).

Belongs to the bacterial ribosomal protein bL28 family.

The protein is Large ribosomal subunit protein bL28 of Caldanaerobacter subterraneus subsp. tengcongensis (strain DSM 15242 / JCM 11007 / NBRC 100824 / MB4) (Thermoanaerobacter tengcongensis).